Reading from the N-terminus, the 308-residue chain is Protein translocase subunit SecF (308 aa).

Transmembrane regions (helical) follow at residues 28 to 48 (SIIL…NFGI), 140 to 160 (IEAG…YIWV), 164 to 184 (WYFG…ALGF), 194 to 214 (LSTI…SVVI), 246 to 266 (ILTV…GGEA), and 272 to 292 (VLVF…SAPI).

Belongs to the SecD/SecF family. SecF subfamily. As to quaternary structure, forms a complex with SecD. Part of the essential Sec protein translocation apparatus which comprises SecA, SecYEG and auxiliary proteins SecDF-YajC and YidC.

Its subcellular location is the cell inner membrane. In terms of biological role, part of the Sec protein translocase complex. Interacts with the SecYEG preprotein conducting channel. SecDF uses the proton motive force (PMF) to complete protein translocation after the ATP-dependent function of SecA. In Rickettsia felis (strain ATCC VR-1525 / URRWXCal2) (Rickettsia azadi), this protein is Protein translocase subunit SecF.